The sequence spans 224 residues: Ribosomal RNA large subunit methyltransferase E (224 aa).

5 residues coordinate S-adenosyl-L-methionine: Gly-64, Trp-66, Asp-97, Asp-113, and Asp-138. The Proton acceptor role is filled by Lys-178.

The protein belongs to the class I-like SAM-binding methyltransferase superfamily. RNA methyltransferase RlmE family.

The protein resides in the cytoplasm. The catalysed reaction is uridine(2552) in 23S rRNA + S-adenosyl-L-methionine = 2'-O-methyluridine(2552) in 23S rRNA + S-adenosyl-L-homocysteine + H(+). Its function is as follows. Specifically methylates the uridine in position 2552 of 23S rRNA at the 2'-O position of the ribose in the fully assembled 50S ribosomal subunit. The polypeptide is Ribosomal RNA large subunit methyltransferase E (Albidiferax ferrireducens (strain ATCC BAA-621 / DSM 15236 / T118) (Rhodoferax ferrireducens)).